Consider the following 470-residue polypeptide: Glucose-1-phosphate adenylyltransferase large subunit 1 (470 aa).

The protein belongs to the bacterial/plant glucose-1-phosphate adenylyltransferase family. Heterotetramer. In terms of tissue distribution, prominently expressed in the leaves and a weaker expression is seen in the tubers.

It localises to the plastid. The protein resides in the chloroplast. The protein localises to the amyloplast. The enzyme catalyses alpha-D-glucose 1-phosphate + ATP + H(+) = ADP-alpha-D-glucose + diphosphate. The protein operates within glycan biosynthesis; starch biosynthesis. Its activity is regulated as follows. Activated by 3'phosphoglycerate, inhibited by orthophosphate. Allosteric regulation. Functionally, this protein plays a role in synthesis of starch. It catalyzes the synthesis of the activated glycosyl donor, ADP-glucose from Glc-1-P and ATP. In Solanum tuberosum (Potato), this protein is Glucose-1-phosphate adenylyltransferase large subunit 1 (AGPS1).